The chain runs to 699 residues: SHC SH2 domain-binding protein 1 homolog A (699 aa).

3 PbH1 repeats span residues 480-502 (SAEL…EIYP), 503-524 (GSKC…LIKD), and 532-554 (IPKI…VLVK). Residues 603–627 (AVEHTNNLEKDQGNLAIAKEEVECE) adopt a coiled-coil conformation.

The protein localises to the midbody. Its subcellular location is the cytoplasm. The protein resides in the cytoskeleton. It localises to the spindle. Functionally, may play a role in signaling pathways governing cellular proliferation. In Xenopus laevis (African clawed frog), this protein is SHC SH2 domain-binding protein 1 homolog A (shcbp1-a).